The chain runs to 235 residues: Large ribosomal subunit protein uL1 (235 aa).

Belongs to the universal ribosomal protein uL1 family. Part of the 50S ribosomal subunit.

Functionally, binds directly to 23S rRNA. The L1 stalk is quite mobile in the ribosome, and is involved in E site tRNA release. In terms of biological role, protein L1 is also a translational repressor protein, it controls the translation of the L11 operon by binding to its mRNA. This is Large ribosomal subunit protein uL1 from Nitratidesulfovibrio vulgaris (strain DSM 19637 / Miyazaki F) (Desulfovibrio vulgaris).